We begin with the raw amino-acid sequence, 146 residues long: Leghemoglobin 2 (146 aa).

The Globin domain occupies 2-146 (GFTAQQDALV…LAAAIKKAMS (145 aa)). At Tyr-30 the chain carries Nitrated tyrosine. Ser-45 is a binding site for heme b. Ser-45 is modified (phosphoserine). His-61 contributes to the O2 binding site. Residues Lys-64, His-93, and Lys-96 each contribute to the heme b site. The residue at position 134 (Tyr-134) is a Nitrated tyrosine.

Belongs to the plant globin family. As to quaternary structure, monomer. In terms of processing, nitrated in effective nodules and particularly in hypoxic conditions; this mechanism may play a protective role in the symbiosis by buffering toxic peroxynitrite NO(2)(-). Nitration level decrease during nodule senescence. Post-translationally, phosphorylation at Ser-45 disrupts the molecular environment of its porphyrin ring oxygen binding pocket, thus leading to a reduced oxygen consumption and to the delivery of oxygen O(2) to symbiosomes. In terms of tissue distribution, specifically and strongly expressed in root nodules and at low levels in seedlings.

The protein resides in the cytoplasm. It is found in the cytosol. Its subcellular location is the nucleus. In terms of biological role, leghemoglobin that reversibly binds oxygen O(2) through a pentacoordinated heme iron. In root nodules, facilitates the diffusion of oxygen to the bacteroids while preventing the bacterial nitrogenase from being inactivated by buffering dioxygen, nitric oxide and carbon monoxide, and promoting the formation of reactive oxygen species (ROS, e.g. H(2)O(2)). This role is essential for symbiotic nitrogen fixation (SNF). This Lotus japonicus (Lotus corniculatus var. japonicus) protein is Leghemoglobin 2.